We begin with the raw amino-acid sequence, 364 residues long: Paraneoplastic antigen Ma2 homolog (364 aa).

An N-acetylalanine modification is found at Ala-2. Residues 335–351 (EEEEATFENENTEEPEG) are compositionally biased toward acidic residues. Residues 335-364 (EEEEATFENENTEEPEGGDGYGHWGNEAND) form a disordered region.

This sequence belongs to the PNMA family.

The protein resides in the nucleus. Its subcellular location is the nucleolus. This chain is Paraneoplastic antigen Ma2 homolog (PNMA2), found in Bos taurus (Bovine).